Here is an 827-residue protein sequence, read N- to C-terminus: Glycerol-3-phosphate acyltransferase (827 aa).

The short motif at C325–M330 is the HXXXXD motif element.

This sequence belongs to the GPAT/DAPAT family.

It is found in the cell inner membrane. The enzyme catalyses sn-glycerol 3-phosphate + an acyl-CoA = a 1-acyl-sn-glycero-3-phosphate + CoA. It participates in phospholipid metabolism; CDP-diacylglycerol biosynthesis; CDP-diacylglycerol from sn-glycerol 3-phosphate: step 1/3. The protein is Glycerol-3-phosphate acyltransferase of Shigella sonnei (strain Ss046).